Consider the following 274-residue polypeptide: Formamidopyrimidine-DNA glycosylase (274 aa).

Pro2 functions as the Schiff-base intermediate with DNA in the catalytic mechanism. Glu3 acts as the Proton donor in catalysis. The Proton donor; for beta-elimination activity role is filled by Lys57. His92, Arg111, and Lys152 together coordinate DNA. The segment at 237 to 271 (QVYGRKGEECRECGTLIQAKVIGQRNSYFCPDCQP) adopts an FPG-type zinc-finger fold. The active-site Proton donor; for delta-elimination activity is Arg261.

This sequence belongs to the FPG family. In terms of assembly, monomer. Requires Zn(2+) as cofactor.

The enzyme catalyses Hydrolysis of DNA containing ring-opened 7-methylguanine residues, releasing 2,6-diamino-4-hydroxy-5-(N-methyl)formamidopyrimidine.. It catalyses the reaction 2'-deoxyribonucleotide-(2'-deoxyribose 5'-phosphate)-2'-deoxyribonucleotide-DNA = a 3'-end 2'-deoxyribonucleotide-(2,3-dehydro-2,3-deoxyribose 5'-phosphate)-DNA + a 5'-end 5'-phospho-2'-deoxyribonucleoside-DNA + H(+). Its function is as follows. Involved in base excision repair of DNA damaged by oxidation or by mutagenic agents. Acts as a DNA glycosylase that recognizes and removes damaged bases. Has a preference for oxidized purines, such as 7,8-dihydro-8-oxoguanine (8-oxoG). Has AP (apurinic/apyrimidinic) lyase activity and introduces nicks in the DNA strand. Cleaves the DNA backbone by beta-delta elimination to generate a single-strand break at the site of the removed base with both 3'- and 5'-phosphates. This is Formamidopyrimidine-DNA glycosylase from Haemophilus ducreyi (strain 35000HP / ATCC 700724).